Here is a 608-residue protein sequence, read N- to C-terminus: MGDLARLPLLEKAPTTHARLLAWVEEVAELTQPDRIHWVDGSEAENKKLTDELVEAGTLKRLNPETFPNSFAAFSDPADVARVEEQTFICSENERDAGFTNNWMAPAEMKQKLRGLFAGSMRGRTMYVIPFVMGHLDAEDPKFGVEITDSAYVVASMRIMARIGTDVLDRITQTDAFFVPALHSLGAPLEAGQADVAWPCNTDKWIVHFPEERSIWSFGSGYGGNALLGKKCYALRIASVMARDEGWLAEHMLILKLTSPEQKTYYISAAFPSACGKTNLALLDPTIKGWKVETLGDDITWMRFGKEGELRAVNPEAGLFGVAPGTGWGTNPNAMRAIAKGNSIFTNVALTDDGGVWWEGMTEETPAHLTDWRGESWTPDSDAPAAHPNSRFCTPIDQIDMLAEEYFSPEGVELSAILFGGRRKTTIPLVTEARNWSNGIFMGSTLSSETTAAAAGAVGVVRRDPMAMLPFIGYDAGDYLNHWVNLSAKANPERLPKIFLVNWFRRTAEGGFAWPGFGDNARVLKWAIERLEGKADAVETPIGFVPTGESIDLEGLDMTPAEVESAVRVDPAEWATELASIEEWFANFGESLPAALQSELDGLKTRLG.

Substrate-binding positions include Arg82 and 222-224 (YGG). Residues Lys231 and His251 each contribute to the Mn(2+) site. Ser273 contributes to the substrate binding site. Position 274–279 (274–279 (ACGKTN)) interacts with GTP. Cys275 is an active-site residue. Asp298 lines the Mn(2+) pocket. A substrate-binding site is contributed by 389 to 391 (NSR). GTP contacts are provided by residues Arg391, Arg422, and 517–520 (FGDN).

This sequence belongs to the phosphoenolpyruvate carboxykinase [GTP] family. In terms of assembly, monomer. Requires Mn(2+) as cofactor.

Its subcellular location is the cytoplasm. It catalyses the reaction oxaloacetate + GTP = phosphoenolpyruvate + GDP + CO2. Its pathway is carbohydrate biosynthesis; gluconeogenesis. Catalyzes the conversion of oxaloacetate (OAA) to phosphoenolpyruvate (PEP), the rate-limiting step in the metabolic pathway that produces glucose from lactate and other precursors derived from the citric acid cycle. The chain is Phosphoenolpyruvate carboxykinase [GTP] from Paenarthrobacter aurescens (strain TC1).